Consider the following 214-residue polypeptide: Uridine kinase (214 aa).

15 to 22 (GASASGKS) contacts ATP.

It belongs to the uridine kinase family.

It is found in the cytoplasm. It carries out the reaction uridine + ATP = UMP + ADP + H(+). It catalyses the reaction cytidine + ATP = CMP + ADP + H(+). It participates in pyrimidine metabolism; CTP biosynthesis via salvage pathway; CTP from cytidine: step 1/3. It functions in the pathway pyrimidine metabolism; UMP biosynthesis via salvage pathway; UMP from uridine: step 1/1. The sequence is that of Uridine kinase from Aeromonas hydrophila subsp. hydrophila (strain ATCC 7966 / DSM 30187 / BCRC 13018 / CCUG 14551 / JCM 1027 / KCTC 2358 / NCIMB 9240 / NCTC 8049).